The following is a 481-amino-acid chain: 5-hydroxytryptamine receptor 2B (481 aa).

Residues 1–56 are Extracellular-facing; that stretch reads MALSYRVSELQSTIPEHILQSTFVHVISSNWSGLQTESIPEEMKQIVEEQGNKLHW. Asparagine 30 is a glycosylation site (N-linked (GlcNAc...) asparagine). A helical transmembrane segment spans residues 57–79; the sequence is AALLILMVIIPTIGGNTLVILAV. At 80–90 the chain is on the cytoplasmic side; it reads SLEKKLQYATN. A helical transmembrane segment spans residues 91 to 113; the sequence is YFLMSLAVADLLVGLFVMPIALL. Over 114-129 the chain is Extracellular; that stretch reads TIMFEAMWPLPLVLCP. Residues cysteine 128 and cysteine 207 are joined by a disulfide bond. The chain crosses the membrane as a helical span at residues 130-151; the sequence is AWLFLDVLFSTASIMHLCAISV. Aspartate 135 and threonine 140 together coordinate ergotamine. Positions 152–154 match the DRY motif; important for ligand-induced conformation changes motif; sequence DRY. The Cytoplasmic portion of the chain corresponds to 152 to 171; the sequence is DRYIAIKKPIQANQYNSRAT. The helical transmembrane segment at 172-192 threads the bilayer; sequence AFIKITVVWLISIGIAIPVPI. Residues 193 to 216 lie on the Extracellular side of the membrane; that stretch reads KGIETDVDNPNNITCVLTKERFGD. An ergotamine-binding site is contributed by leucine 209. A [DE]RFG motif; may stabilize a conformation that preferentially activates signaling via beta-arrestin family members motif is present at residues 212 to 215; the sequence is ERFG. Residues 217-239 traverse the membrane as a helical segment; sequence FMLFGSLAAFFTPLAIMIVTYFL. Over 240 to 324 the chain is Cytoplasmic; the sequence is TIHALQKKAY…TISNEQRASK (85 aa). The helical transmembrane segment at 325-345 threads the bilayer; sequence VLGIVFFLFLLMWCPFFITNI. Over 346 to 360 the chain is Extracellular; sequence TLVLCDSCNQTTLQM. Residues cysteine 350 and cysteine 353 are joined by a disulfide bond. A helical membrane pass occupies residues 361–382; sequence LLEIFVWIGYVSSGVNPLVYTL. The NPxxY motif; important for ligand-induced conformation changes and signaling motif lies at 376–380; sequence NPLVY. The Cytoplasmic portion of the chain corresponds to 383 to 481; the sequence is FNKTFRDAFG…DKTEEQVSYV (99 aa). The S-palmitoyl cysteine moiety is linked to residue cysteine 397. The PDZ-binding motif lies at 479–481; sequence SYV.

This sequence belongs to the G-protein coupled receptor 1 family. In terms of assembly, interacts (via C-terminus) with MPDZ. Ubiquitous. Detected in liver, kidney, heart, pulmonary artery, and intestine. Detected at lower levels in blood, placenta and brain, especially in cerebellum, occipital cortex and frontal cortex.

It localises to the cell membrane. The protein localises to the synapse. The protein resides in the synaptosome. G-protein coupled receptor for 5-hydroxytryptamine (serotonin). Also functions as a receptor for various ergot alkaloid derivatives and psychoactive substances. Ligand binding causes a conformation change that triggers signaling via guanine nucleotide-binding proteins (G proteins) and modulates the activity of downstream effectors. HTR2B is coupled to G(q)/G(11) G alpha proteins and activates phospholipase C-beta, releasing diacylglycerol (DAG) and inositol 1,4,5-trisphosphate (IP3) second messengers that modulate the activity of phosphatidylinositol 3-kinase and promote the release of Ca(2+) ions from intracellular stores, respectively. Beta-arrestin family members inhibit signaling via G proteins and mediate activation of alternative signaling pathways. Plays a role in the regulation of dopamine and 5-hydroxytryptamine release, 5-hydroxytryptamine uptake and in the regulation of extracellular dopamine and 5-hydroxytryptamine levels, and thereby affects neural activity. May play a role in the perception of pain. Plays a role in the regulation of behavior, including impulsive behavior. Required for normal proliferation of embryonic cardiac myocytes and normal heart development. Protects cardiomyocytes against apoptosis. Plays a role in the adaptation of pulmonary arteries to chronic hypoxia. Plays a role in vasoconstriction. Required for normal osteoblast function and proliferation, and for maintaining normal bone density. Required for normal proliferation of the interstitial cells of Cajal in the intestine. This Homo sapiens (Human) protein is 5-hydroxytryptamine receptor 2B.